A 365-amino-acid polypeptide reads, in one-letter code: MQTLKVDLGERSYPIYIGEGLLDQPELLAPHIAGRQVAIVSNETVAPLYLERLSKALGAYSVLPVVLPDGEAHKNWETLQLIFDGLLTARHDRRTTVVALGGGVIGDMAGFAAACYQRGVDFIQVPTTLLSQVDSSVGGKTGINHPLGKNMVGAFYQPKAVLIDTTSLKTLPARELSAGLAEVIKYGLICDKPFLAWLEDNMQALRALDSAALTEAIRRSCAAKAAVVGADERESGLRATLNLGHTFGHAIETHMGYGVWLHGEAVAAGTVMALEMSMRLGWIDQAERDRGIRLLQDAGLPVVPPQEMTPAHFMEHMAVDKKVLDGRLRLVLLRQMGEAVVTDDYSKEILQATLSADYRAIVAQL.

NAD(+)-binding positions include 69 to 74 (DGEAHK), 103 to 107 (GVIGD), 127 to 128 (TT), K140, and K149. E182, H245, and H262 together coordinate Zn(2+).

It belongs to the sugar phosphate cyclases superfamily. Dehydroquinate synthase family. NAD(+) serves as cofactor. It depends on Co(2+) as a cofactor. Requires Zn(2+) as cofactor.

The protein resides in the cytoplasm. The catalysed reaction is 7-phospho-2-dehydro-3-deoxy-D-arabino-heptonate = 3-dehydroquinate + phosphate. It participates in metabolic intermediate biosynthesis; chorismate biosynthesis; chorismate from D-erythrose 4-phosphate and phosphoenolpyruvate: step 2/7. In terms of biological role, catalyzes the conversion of 3-deoxy-D-arabino-heptulosonate 7-phosphate (DAHP) to dehydroquinate (DHQ). The sequence is that of 3-dehydroquinate synthase from Pseudomonas putida (strain ATCC 47054 / DSM 6125 / CFBP 8728 / NCIMB 11950 / KT2440).